The following is a 131-amino-acid chain: D-ribose pyranase (131 aa).

The active-site Proton donor is His-20. Substrate is bound by residues Asp-28, His-98, and 120 to 122 (YSN).

It belongs to the RbsD / FucU family. RbsD subfamily. Homodecamer.

It localises to the cytoplasm. The enzyme catalyses beta-D-ribopyranose = beta-D-ribofuranose. It functions in the pathway carbohydrate metabolism; D-ribose degradation; D-ribose 5-phosphate from beta-D-ribopyranose: step 1/2. Catalyzes the interconversion of beta-pyran and beta-furan forms of D-ribose. The sequence is that of D-ribose pyranase from Latilactobacillus sakei subsp. sakei (strain 23K) (Lactobacillus sakei subsp. sakei).